We begin with the raw amino-acid sequence, 81 residues long: Exodeoxyribonuclease 7 small subunit (81 aa).

Positions Leu-60–Leu-70 are enriched in basic and acidic residues. The segment at Leu-60–Glu-81 is disordered.

It belongs to the XseB family. In terms of assembly, heterooligomer composed of large and small subunits.

The protein localises to the cytoplasm. The enzyme catalyses Exonucleolytic cleavage in either 5'- to 3'- or 3'- to 5'-direction to yield nucleoside 5'-phosphates.. Its function is as follows. Bidirectionally degrades single-stranded DNA into large acid-insoluble oligonucleotides, which are then degraded further into small acid-soluble oligonucleotides. The chain is Exodeoxyribonuclease 7 small subunit from Lactobacillus johnsonii (strain CNCM I-12250 / La1 / NCC 533).